Consider the following 150-residue polypeptide: Large ribosomal subunit protein bL9 (150 aa).

It belongs to the bacterial ribosomal protein bL9 family.

In terms of biological role, binds to the 23S rRNA. The sequence is that of Large ribosomal subunit protein bL9 from Ralstonia nicotianae (strain ATCC BAA-1114 / GMI1000) (Ralstonia solanacearum).